We begin with the raw amino-acid sequence, 573 residues long: 2-succinyl-5-enolpyruvyl-6-hydroxy-3-cyclohexene-1-carboxylate synthase (573 aa).

It belongs to the TPP enzyme family. MenD subfamily. In terms of assembly, homodimer. The cofactor is Mg(2+). Mn(2+) serves as cofactor. Requires thiamine diphosphate as cofactor.

It catalyses the reaction isochorismate + 2-oxoglutarate + H(+) = 5-enolpyruvoyl-6-hydroxy-2-succinyl-cyclohex-3-ene-1-carboxylate + CO2. The protein operates within quinol/quinone metabolism; 1,4-dihydroxy-2-naphthoate biosynthesis; 1,4-dihydroxy-2-naphthoate from chorismate: step 2/7. It functions in the pathway quinol/quinone metabolism; menaquinone biosynthesis. Catalyzes the thiamine diphosphate-dependent decarboxylation of 2-oxoglutarate and the subsequent addition of the resulting succinic semialdehyde-thiamine pyrophosphate anion to isochorismate to yield 2-succinyl-5-enolpyruvyl-6-hydroxy-3-cyclohexene-1-carboxylate (SEPHCHC). The polypeptide is 2-succinyl-5-enolpyruvyl-6-hydroxy-3-cyclohexene-1-carboxylate synthase (Shewanella sp. (strain W3-18-1)).